We begin with the raw amino-acid sequence, 285 residues long: TATA box-binding protein-associated factor RNA polymerase I subunit D (285 aa).

2 disordered regions span residues 1–49 (MAQS…RIPT) and 85–112 (KKKR…TRNI). A compositionally biased stretch (polar residues) spans 21-39 (GNQSDDSSNSSLFKTQCVP). Serine 24 is subject to Phosphoserine. Residues 85–104 (KKKRKKRKKRKYKPKLRRQG) are compositionally biased toward basic residues. The residue at position 134 (serine 134) is a Phosphoserine. Positions 193–219 (HKYMDDDGPLSPIEEPSTEDEATDPQS) are disordered. Serine 229 is subject to Phosphoserine. Composition is skewed to basic and acidic residues over residues 242–264 (NLEQ…KDAT) and 273–285 (KGGE…SEVS). The segment at 242–285 (NLEQGKIKKESAFSKKSKAKDATQRGNRRSWKGGEHACLHSEVS) is disordered.

As to quaternary structure, component of the transcription factor SL1/TIF-IB complex, composed of TBP and at least TAF1A, TAF1B, TAF1C and TAF1D. Interacts with UBTF.

The protein localises to the nucleus. Its function is as follows. Component of the transcription factor SL1/TIF-IB complex, which is involved in the assembly of the PIC (preinitiation complex) during RNA polymerase I-dependent transcription. The rate of PIC formation probably is primarily dependent on the rate of association of SL1/TIF-IB with the rDNA promoter. SL1/TIF-IB is involved in stabilization of nucleolar transcription factor 1/UBTF on rDNA. Formation of SL1/TIF-IB excludes the association of TBP with TFIID subunits. In Rattus norvegicus (Rat), this protein is TATA box-binding protein-associated factor RNA polymerase I subunit D (Taf1d).